Here is a 608-residue protein sequence, read N- to C-terminus: MKVILLKPVQLPMLLLILLKFIMAAKEGKIHVLEFNASSEYTLDKRRVISINGYSATFGPEIRVKSGDTLNLKLTNWICSEEEASKDSDVWKDYCSTALHFHGVVPLANEFDGIPGLTQPTIGYGESYWYNFTIDQSTCGTFWYHSHSSVQYGDGMRGVLIVECDDYDNHVANTINSVRDIETLDDGVVTMKKDKHTKELTDYEVQERIITLSDWYTNWNLDILNDKVLSSTGGTDPKFDGSLINGKSSDGETIKIGFNTEYLLLRIVNSGMSGTQVFHLDGFQLIVLEADGIMIKPFIVQTINLAVGQRYTILVKLKSDTSFIRMINGCNKMMGYITKQWWFYKEGAHLDLPKNPNDVSIEHLPGFTKAELYRDIEPTQEENKKLRTKADPVAVFEFDYAYYKDESTKQKYGTGMYKVNERTFSEYVKDPVRFGFNETYDIVINSLDHMRHPWHMHGHHFQIISLGNKGDGPFHKDVQEGKAWSRYQNDLRHLARTGKAPMVRDSINIAGNSYAVLRINTEMPGKWLLHCHVEWHMMKGLGIVFEVPTTTEDSTKQATTAVLSYPTKEPDPNTVVHTAALEQNKSKVIAVYILIMCAVDAIFYWLLM.

3 consecutive Plastocyanin-like domains span residues 51 to 163 (INGY…LIVE), 243 to 374 (LING…ELYR), and 421 to 548 (ERTF…FEVP). The Cu cation site is built by histidine 100, histidine 102, histidine 145, and histidine 147. Positions 452, 455, 457, 530, 531, 532, and 536 each coordinate Cu cation.

It belongs to the multicopper oxidase family. Cu cation is required as a cofactor.

Functionally, could be an iron transport multicopper oxidase, which is required for Fe(2+) high affinity uptake. May be required to oxidize Fe(2+) and release it from the transporter. Essential component of copper-dependent iron transport. Involved in meiotic prophase and synaptonemal complex (SC) assembly. In Saccharomyces cerevisiae (strain ATCC 204508 / S288c) (Baker's yeast), this protein is Putative multicopper oxidase GMC1 (GMC1).